Consider the following 345-residue polypeptide: 3-hydroxy-5-methyl-1-naphthoate 3-O-methyltransferase (345 aa).

Aspartate 205 serves as a coordination point for S-adenosyl-L-methionine. Histidine 252 (proton acceptor) is an active-site residue.

This sequence belongs to the class I-like SAM-binding methyltransferase superfamily. Cation-independent O-methyltransferase family.

It catalyses the reaction 3-hydroxy-5-methyl-1-naphthoate + S-adenosyl-L-methionine = 3-methoxy-5-methyl-1-naphthoate + S-adenosyl-L-homocysteine + H(+). It participates in antibiotic biosynthesis. With respect to regulation, inhibited by different divalent cations, such as Mg(2+), Mn(2+), Fe(2+), Cu(2+) and Zn(2+). Its function is as follows. O-methyltransferase that mediates the formation of 3-methoxy-5-methyl-1-naphthoate from 3-hydroxy-5-methyl-1-naphthoate in the biosynthesis of the antitumor antibiotic azinomycin B. The protein is 3-hydroxy-5-methyl-1-naphthoate 3-O-methyltransferase of Streptomyces sahachiroi.